We begin with the raw amino-acid sequence, 83 residues long: Sec-independent protein translocase protein TatA (83 aa).

Residues 1 to 21 (MGNMGIWQLLIIAVIVILLFG) form a helical membrane-spanning segment. Composition is skewed to basic and acidic residues over residues 47 to 57 (EEKKALEETAS) and 71 to 83 (AEKK…KEQV). Positions 47–83 (EEKKALEETASEKATPSVEKTAPNAEKKTETKDKEQV) are disordered.

It belongs to the TatA/E family. The Tat system comprises two distinct complexes: a TatABC complex, containing multiple copies of TatA, TatB and TatC subunits, and a separate TatA complex, containing only TatA subunits. Substrates initially bind to the TatABC complex, which probably triggers association of the separate TatA complex to form the active translocon.

It localises to the cell inner membrane. Its function is as follows. Part of the twin-arginine translocation (Tat) system that transports large folded proteins containing a characteristic twin-arginine motif in their signal peptide across membranes. TatA could form the protein-conducting channel of the Tat system. This chain is Sec-independent protein translocase protein TatA, found in Shewanella woodyi (strain ATCC 51908 / MS32).